Reading from the N-terminus, the 137-residue chain is SPbeta prophage-derived disulfide bond formation protein A (137 aa).

The N-terminal stretch at 1-25 is a signal peptide; the sequence is MKKWIVLFLVLIAAAISIFVYVSTG. The Thioredoxin domain occupies 26–136; that stretch reads SEKPFYNDIN…IEKFFDKNGD (111 aa). A disulfide bridge links cysteine 58 with cysteine 61.

Belongs to the thioredoxin family.

It is found in the secreted. In terms of biological role, unknown; dispensable for production of the lantibiotic sublancin 168 and for competence for DNA uptake. The chain is SPbeta prophage-derived disulfide bond formation protein A (bdbA) from Bacillus subtilis (strain 168).